The chain runs to 498 residues: L-amino acid oxidase Bs29 (498 aa).

A signal peptide spans 1-3 (SCA). Cys-12 and Cys-175 are disulfide-bonded. FAD is bound by residues 45-46 (MS), 65-66 (EA), Arg-73, and 89-92 (GPMR). Residue Arg-92 coordinates substrate. Asn-174 carries N-linked (GlcNAc...) asparagine glycosylation. Position 225 (His-225) interacts with substrate. FAD is bound at residue Val-263. The cysteines at positions 333 and 414 are disulfide-linked. Tyr-374 is a binding site for substrate. FAD-binding positions include Glu-459 and 466–471 (GWIDST). 466 to 467 (GW) serves as a coordination point for substrate.

It belongs to the flavin monoamine oxidase family. FIG1 subfamily. Monomer. This is in contrast with most of its orthologs, that are non-covalently linked homodimers. Requires FAD as cofactor. As to expression, expressed by the venom gland.

It is found in the secreted. It catalyses the reaction an L-alpha-amino acid + O2 + H2O = a 2-oxocarboxylate + H2O2 + NH4(+). It carries out the reaction L-leucine + O2 + H2O = 4-methyl-2-oxopentanoate + H2O2 + NH4(+). Catalyzes an oxidative deamination of predominantly hydrophobic and aromatic L-amino acids, thus producing hydrogen peroxide that may contribute to the diverse toxic effects of this enzyme. Shows activity on L-Leu. Damage cell membranes of the Gram-positive bacteria S.aureus (MIC=4 ug/ml and MBC=8 ug/ml) and the Gram-negative bacteria A.baumanni (MIC=2 ug/ml and MBC=4 ug/ml). This antibacterial activity is dependent on the production of hydrogen peroxyde, since it is inhibited by catalase, a hydrogen peroxyde scavenger. The polypeptide is L-amino acid oxidase Bs29 (Bothriechis schlegelii (Eyelash palm pitviper)).